The chain runs to 380 residues: Erythronate-4-phosphate dehydrogenase (380 aa).

Substrate is bound by residues Ser45 and Thr66. Cys65 and Cys90 are joined by a disulfide. NAD(+)-binding positions include 126–127 (QV), Asp146, Thr175, 206–208 (ASR), and Asp232. The active site involves Arg208. Glu237 is a catalytic residue. The active-site Proton donor is His254. Gly257 provides a ligand contact to NAD(+). Position 258 (Tyr258) interacts with substrate.

This sequence belongs to the D-isomer specific 2-hydroxyacid dehydrogenase family. PdxB subfamily. As to quaternary structure, homodimer.

The protein localises to the cytoplasm. The catalysed reaction is 4-phospho-D-erythronate + NAD(+) = (R)-3-hydroxy-2-oxo-4-phosphooxybutanoate + NADH + H(+). The protein operates within cofactor biosynthesis; pyridoxine 5'-phosphate biosynthesis; pyridoxine 5'-phosphate from D-erythrose 4-phosphate: step 2/5. In terms of biological role, catalyzes the oxidation of erythronate-4-phosphate to 3-hydroxy-2-oxo-4-phosphonooxybutanoate. This is Erythronate-4-phosphate dehydrogenase from Pseudomonas aeruginosa (strain ATCC 15692 / DSM 22644 / CIP 104116 / JCM 14847 / LMG 12228 / 1C / PRS 101 / PAO1).